Consider the following 260-residue polypeptide: Ribonuclease HII (260 aa).

In terms of domain architecture, RNase H type-2 spans 70–260; it reads QAIAGIDEVG…PIKSMLKEKN (191 aa). A divalent metal cation is bound by residues Asp76, Glu77, and Asp171.

The protein belongs to the RNase HII family. It depends on Mn(2+) as a cofactor. The cofactor is Mg(2+).

It is found in the cytoplasm. The enzyme catalyses Endonucleolytic cleavage to 5'-phosphomonoester.. In terms of biological role, endonuclease that specifically degrades the RNA of RNA-DNA hybrids. In Streptococcus mutans serotype c (strain ATCC 700610 / UA159), this protein is Ribonuclease HII.